Here is a 2410-residue protein sequence, read N- to C-terminus: Dual specificity protein kinase splA (2410 aa).

6 disordered regions span residues 29-48 (NNNN…NNNN), 66-103 (NHPS…GELT), 116-158 (NTQT…SNGG), 187-252 (NISP…SSGI), 508-647 (QQLQ…VPSA), and 659-820 (SSSS…KKEG). 2 stretches are compositionally biased toward low complexity: residues 116 to 128 (NTQT…TSPN) and 137 to 158 (NTTT…SNGG). The span at 514-525 (QPPPTIQPPPQQ) shows a compositional bias: pro residues. Positions 530–544 (LRGNRSSGNLSGLNS) are enriched in low complexity. Residues 545 to 554 (FSLKQSTDSL) show a composition bias toward polar residues. Over residues 560 to 583 (SQQSTVSSNSTPIAATPISPLTAP) the composition is skewed to low complexity. Residues 584–594 (TSPPPPPPPPT) show a composition bias toward pro residues. Low complexity-rich tracts occupy residues 595–618 (NFNS…NTTV), 627–639 (VLPK…SPRP), 659–686 (SSSS…LNIS), 701–738 (SPSY…SPSV), 746–759 (ISPN…PNIS), and 777–813 (NTNN…NNTN). 2 B30.2/SPRY domains span residues 822-1004 (SSWF…GPFS) and 1020-1209 (DSGG…PPFK). Disordered regions lie at residues 1228–1428 (PNGN…NNIY) and 1493–1512 (SLGV…PRKI). Composition is skewed to low complexity over residues 1229 to 1359 (NGNN…NNNI), 1373 to 1399 (SSTG…NNSS), 1419 to 1428 (SSTNNNNNIY), and 1493 to 1507 (SLGV…SPKT). Residues 1481–1703 (PITASTNHTL…CVATFPGGHF (223 aa)) enclose the B30.2/SPRY 3 domain. Positions 1734 to 1798 (WAPNDVAIWL…INRLNRMIQI (65 aa)) constitute an SAM domain. Residues 1862 to 2105 (KSYTQKEIED…PPPPPQLPVR (244 aa)) form a disordered region. The segment covering 1865-1874 (TQKEIEDRNR) has biased composition (basic and acidic residues). Positions 1951-1967 (SVSSTGGSSGFLTFPSS) are enriched in low complexity. Polar residues predominate over residues 1989 to 2002 (ITSNYKGITNTGQP). A compositionally biased stretch (low complexity) spans 2020–2070 (SNNGNNGNNNNNNNNNNIKANQQQQQQSSYQQSQTQQQQQHITSTSTSTTN). Pro residues predominate over residues 2089–2102 (PSRPPPPPPPPPQL). Residues 2115-2387 (LEFGQTIGKG…FKQIIVHLKE (273 aa)) enclose the Protein kinase domain. ATP-binding positions include 2121-2129 (IGKGFFGEV) and lysine 2142. Catalysis depends on aspartate 2243, which acts as the Proton acceptor.

It belongs to the protein kinase superfamily. TKL Tyr protein kinase family. Post-translationally, tyrosine kinase domain is capable of autophosphorylation, in vitro; however it is also autophosphorylated on serine and threonine residues.

It catalyses the reaction L-tyrosyl-[protein] + ATP = O-phospho-L-tyrosyl-[protein] + ADP + H(+). Functionally, essential for spore differentiation. The sequence is that of Dual specificity protein kinase splA (splA) from Dictyostelium discoideum (Social amoeba).